Consider the following 172-residue polypeptide: NAD(P)H-quinone oxidoreductase subunit I, chloroplastic (172 aa).

4Fe-4S ferredoxin-type domains follow at residues Gly-55–Lys-84 and Leu-95–Glu-124. Residues Cys-64, Cys-67, Cys-70, Cys-74, Cys-104, Cys-107, Cys-110, and Cys-114 each contribute to the [4Fe-4S] cluster site.

The protein belongs to the complex I 23 kDa subunit family. In terms of assembly, NDH is composed of at least 16 different subunits, 5 of which are encoded in the nucleus. [4Fe-4S] cluster serves as cofactor.

The protein localises to the plastid. It is found in the chloroplast thylakoid membrane. It carries out the reaction a plastoquinone + NADH + (n+1) H(+)(in) = a plastoquinol + NAD(+) + n H(+)(out). It catalyses the reaction a plastoquinone + NADPH + (n+1) H(+)(in) = a plastoquinol + NADP(+) + n H(+)(out). Its function is as follows. NDH shuttles electrons from NAD(P)H:plastoquinone, via FMN and iron-sulfur (Fe-S) centers, to quinones in the photosynthetic chain and possibly in a chloroplast respiratory chain. The immediate electron acceptor for the enzyme in this species is believed to be plastoquinone. Couples the redox reaction to proton translocation, and thus conserves the redox energy in a proton gradient. The polypeptide is NAD(P)H-quinone oxidoreductase subunit I, chloroplastic (Capsella bursa-pastoris (Shepherd's purse)).